The primary structure comprises 512 residues: tRNA modification GTPase gtpbp3, mitochondrial (512 aa).

A TrmE-type G domain is found at 246–434; the sequence is GANIAIVGPP…LLNLLKLNLK (189 aa). Residues 253 to 260, 300 to 304, and 375 to 378 contribute to the GTP site; these read GPPNAGKS, DTAGL, and NKSD.

The protein belongs to the TRAFAC class TrmE-Era-EngA-EngB-Septin-like GTPase superfamily. TrmE GTPase family.

It localises to the mitochondrion. In terms of biological role, GTPase involved in the 5-carboxymethylaminomethyl modification (mnm(5)s(2)U34) of the wobble uridine base in mitochondrial tRNAs. This is tRNA modification GTPase gtpbp3, mitochondrial (gtpbp3) from Dictyostelium discoideum (Social amoeba).